The primary structure comprises 65 residues: Alpha-insect toxin BotIT1 (65 aa).

The LCN-type CS-alpha/beta domain maps to 2–64 (RDAYIAQNYN…VPIRIPGKCH (63 aa)). Cystine bridges form between Cys12/Cys63, Cys16/Cys36, Cys22/Cys46, and Cys26/Cys48.

This sequence belongs to the long (4 C-C) scorpion toxin superfamily. Sodium channel inhibitor family. Alpha subfamily. Expressed by the venom gland.

Its subcellular location is the secreted. Functionally, alpha toxins bind voltage-independently at site-3 of sodium channels (Nav) and inhibit the inactivation of the activated channels, thereby blocking neuronal transmission. This contractive toxin is highly toxic to insects and barely toxic to mammals. This Buthus occitanus tunetanus (Common European scorpion) protein is Alpha-insect toxin BotIT1.